Here is a 327-residue protein sequence, read N- to C-terminus: Vacuolar protein sorting-associated protein 26A (327 aa).

The tract at residues Arg-305–Met-327 is disordered.

This sequence belongs to the VPS26 family. Component of the heterotrimeric retromer cargo-selective complex (CSC) which is believed to associate with variable sorting nexins to form functionally distinct retromer complex variants.

Its subcellular location is the cytoplasm. It localises to the endosome membrane. It is found in the early endosome. In terms of biological role, acts as a component of the retromer cargo-selective complex (CSC). The CSC is believed to be the core functional component of retromer or respective retromer complex variants acting to prevent missorting of selected transmembrane cargo proteins into the lysosomal degradation pathway. Retromer mediates retrograde transport of cargo proteins from endosomes to the trans-Golgi network (TGN). The polypeptide is Vacuolar protein sorting-associated protein 26A (vps26a) (Danio rerio (Zebrafish)).